Reading from the N-terminus, the 541-residue chain is Beta-glucuronidase (541 aa).

A signal peptide spans 1–20 (MHHHPITLLSLLLGAAQSIA). N-linked (GlcNAc...) asparagine glycosylation is found at N69, N115, and N157. The Proton donor role is filled by E208. N-linked (GlcNAc...) asparagine glycans are attached at residues N217, N291, and N304. E324 functions as the Nucleophile in the catalytic mechanism. N-linked (GlcNAc...) asparagine glycans are attached at residues N380, N426, N441, N483, and N512.

It belongs to the glycosyl hydrolase 79 family. N-glycosylated.

The protein resides in the secreted. The enzyme catalyses a beta-D-glucuronoside + H2O = D-glucuronate + an alcohol. Functionally, beta-glucuronidase that hydrolyzes beta-glucuronosyl and 4-O-methyl-beta-glucuronosyl residues of arabinogalactan-protein. Hydrolyzed heparan sulfate only very weakly. Has no activity on xylan from birchwood. Able to catalyze the transglycosylation of glucuronic acid (GlcA) residues from p-nitrophenyl-beta-glucuronic acid (PNP beta-GlcA) to various monosaccharide acceptors such as glucose, galactose and xylose. This chain is Beta-glucuronidase, found in Aspergillus niger (strain ATCC MYA-4892 / CBS 513.88 / FGSC A1513).